Consider the following 357-residue polypeptide: F-box only protein 25 (357 aa).

The interaction with beta-actin stretch occupies residues 1-83 (MPFLGQDWRS…DTAAHSFYRE (83 aa)). The F-box domain occupies 225–273 (LTLSDLPLHMLNNILYRFSDGWDIVTLGQVTPTLYMLSEDRRLWKRLCQ).

In terms of assembly, part of a SCF (SKP1-cullin-F-box) protein ligase complex consisting of FBXO25, SKP1, CUL1 and RBX1. Interacts directly with SKP1 and CUL1. Interacts (via C-terminus) with beta-actin (via N-terminus). In terms of tissue distribution, expressed in all tissues tested, except striated muscle (at protein level). Expressed predominantly in the cerebral cortex, the hippocampus and the Purkinje cell layer of the brain. Intestine and kidney show also significant levels.

The protein resides in the nucleus. It functions in the pathway protein modification; protein ubiquitination. Its function is as follows. Substrate-recognition component of the SCF (SKP1-CUL1-F-box protein)-type E3 ubiquitin ligase complex. May play a role in accumulation of expanded polyglutamine (polyQ) protein huntingtin (HTT). In Mus musculus (Mouse), this protein is F-box only protein 25 (Fbxo25).